The sequence spans 384 residues: 8-amino-7-oxononanoate synthase (384 aa).

Arginine 21 provides a ligand contact to substrate. Residue 108–109 (GF) coordinates pyridoxal 5'-phosphate. Residue histidine 133 participates in substrate binding. Positions 179, 207, and 233 each coordinate pyridoxal 5'-phosphate. At lysine 236 the chain carries N6-(pyridoxal phosphate)lysine. Threonine 352 provides a ligand contact to substrate.

It belongs to the class-II pyridoxal-phosphate-dependent aminotransferase family. BioF subfamily. As to quaternary structure, homodimer. Pyridoxal 5'-phosphate serves as cofactor.

The enzyme catalyses 6-carboxyhexanoyl-[ACP] + L-alanine + H(+) = (8S)-8-amino-7-oxononanoate + holo-[ACP] + CO2. It functions in the pathway cofactor biosynthesis; biotin biosynthesis. Catalyzes the decarboxylative condensation of pimeloyl-[acyl-carrier protein] and L-alanine to produce 8-amino-7-oxononanoate (AON), [acyl-carrier protein], and carbon dioxide. In Escherichia coli O6:K15:H31 (strain 536 / UPEC), this protein is 8-amino-7-oxononanoate synthase.